The sequence spans 106 residues: 10 kDa heat shock protein, mitochondrial (106 aa).

N-acetylserine is present on Ser-2. Ser-31 carries the post-translational modification Phosphoserine.

The protein belongs to the GroES chaperonin family. Homohexamer. In terms of processing, the N-terminus is blocked.

Its subcellular location is the mitochondrion matrix. Its function is as follows. Eukaryotic CPN10 homolog which is essential for mitochondrial protein biogenesis, together with CPN60. Binds to CPN60 in the presence of Mg-ATP and suppresses the ATPase activity of the latter. The protein is 10 kDa heat shock protein, mitochondrial (HSP10) of Saccharomyces cerevisiae (strain ATCC 204508 / S288c) (Baker's yeast).